A 235-amino-acid polypeptide reads, in one-letter code: Aspartate/glutamate leucyltransferase (235 aa).

This sequence belongs to the R-transferase family. Bpt subfamily.

The protein localises to the cytoplasm. The catalysed reaction is N-terminal L-glutamyl-[protein] + L-leucyl-tRNA(Leu) = N-terminal L-leucyl-L-glutamyl-[protein] + tRNA(Leu) + H(+). The enzyme catalyses N-terminal L-aspartyl-[protein] + L-leucyl-tRNA(Leu) = N-terminal L-leucyl-L-aspartyl-[protein] + tRNA(Leu) + H(+). Functions in the N-end rule pathway of protein degradation where it conjugates Leu from its aminoacyl-tRNA to the N-termini of proteins containing an N-terminal aspartate or glutamate. In Pseudomonas syringae pv. syringae (strain B728a), this protein is Aspartate/glutamate leucyltransferase.